The sequence spans 153 residues: Alpha-amylase type B isozyme (153 aa).

Substrate-binding positions include lysine 19, 25 to 27 (GWW), histidine 38, glutamine 44, lysine 123, and tryptophan 150.

The protein belongs to the glycosyl hydrolase 13 family. As to quaternary structure, monomer. Ca(2+) serves as cofactor.

It catalyses the reaction Endohydrolysis of (1-&gt;4)-alpha-D-glucosidic linkages in polysaccharides containing three or more (1-&gt;4)-alpha-linked D-glucose units.. This is Alpha-amylase type B isozyme (AMY1.4) from Hordeum vulgare (Barley).